Reading from the N-terminus, the 322-residue chain is Phospho-N-acetylmuramoyl-pentapeptide-transferase (322 aa).

10 helical membrane passes run 6–26 (ASCIALVSSLTLTVIFLPLLI), 54–74 (TMGGTIFVIAAVISVIWVTAW), 82–102 (VWILVISLLGYGIIGFLDDGI), 122–142 (IIIAVVIVLIASSDHFNFGLY), 145–165 (FAGVVHSVALFVIFIIFWLVG), 176–196 (LDGLATGLSVVAYGTYAYIAF), 200–220 (NFAILAFCMSVIGGLIAFFIF), 227–247 (IFMGDAGSLALGGGLATVSIM), 255–275 (LLVGIVFVCETASVIMQVISF), and 302–322 (VDIVFWIVGLVGSILYLAIWG).

This sequence belongs to the glycosyltransferase 4 family. MraY subfamily. The cofactor is Mg(2+).

Its subcellular location is the cell membrane. The enzyme catalyses UDP-N-acetyl-alpha-D-muramoyl-L-alanyl-gamma-D-glutamyl-L-lysyl-D-alanyl-D-alanine + di-trans,octa-cis-undecaprenyl phosphate = Mur2Ac(oyl-L-Ala-gamma-D-Glu-L-Lys-D-Ala-D-Ala)-di-trans,octa-cis-undecaprenyl diphosphate + UMP. It participates in cell wall biogenesis; peptidoglycan biosynthesis. Functionally, catalyzes the initial step of the lipid cycle reactions in the biosynthesis of the cell wall peptidoglycan: transfers peptidoglycan precursor phospho-MurNAc-pentapeptide from UDP-MurNAc-pentapeptide onto the lipid carrier undecaprenyl phosphate, yielding undecaprenyl-pyrophosphoryl-MurNAc-pentapeptide, known as lipid I. The sequence is that of Phospho-N-acetylmuramoyl-pentapeptide-transferase from Lactobacillus helveticus (strain DPC 4571).